Consider the following 202-residue polypeptide: CASP-like protein 1E1 (202 aa).

At 1 to 33 the chain is on the cytoplasmic side; sequence MESQCRPNVDGVHNGVESHVKVVEKPRSVGSSS. Residues 34–54 form a helical membrane-spanning segment; the sequence is EFVLRILGLLLTLIAAVVAGV. Topologically, residues 55 to 85 are extracellular; sequence DKQTKIIPLTLIKTLPSLHVPVTAKWSDMSA. Residues 86 to 106 form a helical membrane-spanning segment; the sequence is FVYLVVSNAIACSYAAISLVL. Over 107–118 the chain is Cytoplasmic; the sequence is VTMLGRRGKGGR. Residues 119-139 form a helical membrane-spanning segment; it reads VLAVIVLDLHMVGLLFSANGA. At 140–172 the chain is on the extracellular side; sequence ATAVGVLGQYGNSHVEWKKVCNVFDSFCHHLVA. The helical transmembrane segment at 173–193 threads the bilayer; the sequence is SLALSFLGSLSFLGLVLLAIL. Over 194 to 202 the chain is Cytoplasmic; sequence NLHKKSSTK.

Belongs to the Casparian strip membrane proteins (CASP) family. Homodimer and heterodimers.

The protein localises to the cell membrane. The sequence is that of CASP-like protein 1E1 from Vitis vinifera (Grape).